The primary structure comprises 303 residues: Bifunctional protein FolD (303 aa).

Residues 169 to 171 (GRG), Thr196, and Val237 each bind NADP(+).

The protein belongs to the tetrahydrofolate dehydrogenase/cyclohydrolase family. Homodimer.

It carries out the reaction (6R)-5,10-methylene-5,6,7,8-tetrahydrofolate + NADP(+) = (6R)-5,10-methenyltetrahydrofolate + NADPH. It catalyses the reaction (6R)-5,10-methenyltetrahydrofolate + H2O = (6R)-10-formyltetrahydrofolate + H(+). It participates in one-carbon metabolism; tetrahydrofolate interconversion. Catalyzes the oxidation of 5,10-methylenetetrahydrofolate to 5,10-methenyltetrahydrofolate and then the hydrolysis of 5,10-methenyltetrahydrofolate to 10-formyltetrahydrofolate. This is Bifunctional protein FolD from Micrococcus luteus (strain ATCC 4698 / DSM 20030 / JCM 1464 / CCM 169 / CCUG 5858 / IAM 1056 / NBRC 3333 / NCIMB 9278 / NCTC 2665 / VKM Ac-2230) (Micrococcus lysodeikticus).